We begin with the raw amino-acid sequence, 218 residues long: ATP synthase subunit a (218 aa).

5 helical membrane-spanning segments follow: residues Ile-17 to Leu-37, Tyr-75 to Ile-95, Asp-104 to Ile-124, Leu-162 to Leu-184, and Gly-196 to His-216.

It belongs to the ATPase A chain family. F-type ATPases have 2 components, CF(1) - the catalytic core - and CF(0) - the membrane proton channel. CF(1) has five subunits: alpha(3), beta(3), gamma(1), delta(1), epsilon(1). CF(0) has three main subunits: a(1), b(2) and c(9-12). The alpha and beta chains form an alternating ring which encloses part of the gamma chain. CF(1) is attached to CF(0) by a central stalk formed by the gamma and epsilon chains, while a peripheral stalk is formed by the delta and b chains. In this bacterium the a and b subunits are transcribed but do not seem to be translated, thus the ATP synthase consists of the alpha, beta, gamma, delta, epsilon and c subunits.

Its subcellular location is the cell membrane. Its function is as follows. Key component of the proton channel; it plays a direct role in the translocation of protons across the membrane. The chain is ATP synthase subunit a from Moorella thermoacetica (strain ATCC 39073 / JCM 9320).